Reading from the N-terminus, the 551-residue chain is Membrane protein insertase YidC (551 aa).

A helical membrane pass occupies residues alanine 3–glycine 23. Positions asparagine 33–tyrosine 47 are enriched in polar residues. Positions asparagine 33 to valine 58 are disordered. Helical transmembrane passes span leucine 361–tyrosine 381, leucine 431–leucine 451, and valine 504–valine 524.

The protein belongs to the OXA1/ALB3/YidC family. Type 1 subfamily. In terms of assembly, interacts with the Sec translocase complex via SecD. Specifically interacts with transmembrane segments of nascent integral membrane proteins during membrane integration.

The protein localises to the cell inner membrane. Required for the insertion and/or proper folding and/or complex formation of integral membrane proteins into the membrane. Involved in integration of membrane proteins that insert both dependently and independently of the Sec translocase complex, as well as at least some lipoproteins. Aids folding of multispanning membrane proteins. This chain is Membrane protein insertase YidC, found in Francisella tularensis subsp. novicida (strain U112).